Reading from the N-terminus, the 183-residue chain is Akirin-1B (183 aa).

The segment at 14 to 43 (EALMSPQSPKRRRCAPLPGSPATPSPQRCG) is disordered. The SYVS motif signature appears at 180 to 183 (SYVS).

Belongs to the akirin family.

The protein localises to the nucleus. Molecular adapter that acts as a bridge between proteins, and which is involved skeletal muscle development. Functions as a signal transducer for MSTN during skeletal muscle regeneration and myogenesis. This Xenopus laevis (African clawed frog) protein is Akirin-1B (akirin1-b).